A 352-amino-acid polypeptide reads, in one-letter code: 4-hydroxy-3-methylbut-2-en-1-yl diphosphate synthase (flavodoxin) (352 aa).

Residues Cys-263, Cys-266, Cys-298, and Glu-305 each coordinate [4Fe-4S] cluster.

It belongs to the IspG family. Requires [4Fe-4S] cluster as cofactor.

It catalyses the reaction (2E)-4-hydroxy-3-methylbut-2-enyl diphosphate + oxidized [flavodoxin] + H2O + 2 H(+) = 2-C-methyl-D-erythritol 2,4-cyclic diphosphate + reduced [flavodoxin]. The protein operates within isoprenoid biosynthesis; isopentenyl diphosphate biosynthesis via DXP pathway; isopentenyl diphosphate from 1-deoxy-D-xylulose 5-phosphate: step 5/6. Its function is as follows. Converts 2C-methyl-D-erythritol 2,4-cyclodiphosphate (ME-2,4cPP) into 1-hydroxy-2-methyl-2-(E)-butenyl 4-diphosphate. The protein is 4-hydroxy-3-methylbut-2-en-1-yl diphosphate synthase (flavodoxin) of Sulfurimonas denitrificans (strain ATCC 33889 / DSM 1251) (Thiomicrospira denitrificans (strain ATCC 33889 / DSM 1251)).